Reading from the N-terminus, the 368-residue chain is MIITQVELYKSPVKLKEPFKISLGILTHANNVIVRIHTASGHIGYGECSPFMTIHGESMDTAFIVGQYLAKGLIGTSCLDIVSNSLLMDAIIYGNSCIKSAFNIALYDLAAQHAGLPLYAFLGGKKDKIIQTDYTVSIDEPHKMAADAVQIKKNGFEIIKVKVGGSKELDVERIRMIREAAGDSITLRIDANQGWSVETAIETLTLLEPYNIQHCEEPVSRNLYTALPKIRQACRIPIMADESCCNSFDAERLIQIQACDSFNLKLSKSAGITNALNIIRLAEQAHMPVQVGGFLESRLGFTAAAHVALVSKTICYYDFDTPLMFEADPVRGGIVYQQRGIIEVPETAGLGAGYQKDYLSGLEKICIN.

Residues T135 and 160 to 162 (KVK) each bind substrate. Residues D190, E216, and D241 each coordinate Mg(2+). Residues K265 and 318–320 (DFD) contribute to the substrate site.

This sequence belongs to the mandelate racemase/muconate lactonizing enzyme family. The cofactor is Mg(2+).

Functionally, catalyzes the epimerization of D-Ala-D-Ala to D-Ala-L-Ala. Has broad substrate specificity and catalyzes the epimerization of a variety of dipeptides containing an N-terminal Ala followed by a hydrophobic or polar residue, such as Val, Ser and Met (in vitro). This Cytophaga hutchinsonii (strain ATCC 33406 / DSM 1761 / CIP 103989 / NBRC 15051 / NCIMB 9469 / D465) protein is D-Ala-D/L-Ala epimerase (tfdD).